Consider the following 301-residue polypeptide: Thymidylate synthase (301 aa).

DUMP is bound by residues Arg-38 and 163–164 (RR). Cys-183 (nucleophile) is an active-site residue. DUMP is bound by residues 203–206 (RSGD), Asn-214, and 244–246 (HIY). Asp-206 lines the (6R)-5,10-methylene-5,6,7,8-tetrahydrofolate pocket. Ala-300 contributes to the (6R)-5,10-methylene-5,6,7,8-tetrahydrofolate binding site.

Belongs to the thymidylate synthase family. As to quaternary structure, homodimer.

It carries out the reaction dUMP + (6R)-5,10-methylene-5,6,7,8-tetrahydrofolate = 7,8-dihydrofolate + dTMP. The protein operates within pyrimidine metabolism; dTTP biosynthesis. Its function is as follows. Catalyzes the reductive methylation of deoxyuridylate to thymidylate. The protein is Thymidylate synthase of Varicella-zoster virus (strain Dumas) (HHV-3).